The chain runs to 146 residues: Large ribosomal subunit protein bL19 (146 aa).

Belongs to the bacterial ribosomal protein bL19 family.

In terms of biological role, this protein is located at the 30S-50S ribosomal subunit interface and may play a role in the structure and function of the aminoacyl-tRNA binding site. The sequence is that of Large ribosomal subunit protein bL19 from Bartonella bacilliformis (strain ATCC 35685 / KC583 / Herrer 020/F12,63).